The chain runs to 332 residues: Transcription factor HBP-1b(c38) (332 aa).

The interval 1-48 (MAEASPRTETSTDDTDENLMLEPGNAALAVVSDSSDRSRDKNGDQKTM) is disordered. The segment covering 34–47 (SSDRSRDKNGDQKT) has biased composition (basic and acidic residues). Residues 44–107 (DQKTMRRLAQ…SSADQSHSMS (64 aa)) form the bZIP domain. The basic motif stretch occupies residues 46–66 (KTMRRLAQNREAARKSRLRKK). A coiled-coil region spans residues 47 to 142 (TMRRLAQNRE…RAAVNAHAGD (96 aa)). The leucine-zipper stretch occupies residues 72–86 (LENSRLKLTQLEQEL). The DOG1 domain occupies 111 to 329 (ALAFDTEYAR…RALSSLWLAR (219 aa)).

Belongs to the bZIP family. As to quaternary structure, binds DNA as a dimer.

Its subcellular location is the nucleus. In terms of biological role, transcriptional activator that binds specifically to the DNA sequence 5'-TGACG-3'. Recognizes ocs elements like the as-1 motif of the cauliflower mosaic virus 35S promoter. Binding to the as-1-like cis elements mediate auxin- and salicylic acid-inducible transcription. Binds to the hexamer motif 5'-ACGTCA-3' of histone gene promoters. The sequence is that of Transcription factor HBP-1b(c38) from Triticum aestivum (Wheat).